A 427-amino-acid polypeptide reads, in one-letter code: Enolase (427 aa).

Glutamine 162 provides a ligand contact to (2R)-2-phosphoglycerate. The active-site Proton donor is the glutamate 204. Residues aspartate 241, glutamate 284, and aspartate 311 each contribute to the Mg(2+) site. (2R)-2-phosphoglycerate-binding residues include lysine 336, arginine 365, serine 366, and lysine 387. Lysine 336 acts as the Proton acceptor in catalysis.

Belongs to the enolase family. Requires Mg(2+) as cofactor.

It localises to the cytoplasm. It is found in the secreted. Its subcellular location is the cell surface. It carries out the reaction (2R)-2-phosphoglycerate = phosphoenolpyruvate + H2O. It participates in carbohydrate degradation; glycolysis; pyruvate from D-glyceraldehyde 3-phosphate: step 4/5. Catalyzes the reversible conversion of 2-phosphoglycerate (2-PG) into phosphoenolpyruvate (PEP). It is essential for the degradation of carbohydrates via glycolysis. The protein is Enolase of Natranaerobius thermophilus (strain ATCC BAA-1301 / DSM 18059 / JW/NM-WN-LF).